Consider the following 317-residue polypeptide: Tumor-associated calcium signal transducer 2 (317 aa).

An N-terminal signal peptide occupies residues 1-24 (MARGLDLAPLLLLLLAMATRFCTA). Topologically, residues 25-270 (QSNCTCPTNK…QFSMKRLTAG (246 aa)) are extracellular. Asparagine 27 is a glycosylation site (N-linked (GlcNAc...) asparagine). Residues 64 to 139 (TSKCLLLKAR…TDKGDQSLRC (76 aa)) enclose the Thyroglobulin type-1 domain. 3 disulfides stabilise this stretch: cysteine 67/cysteine 102, cysteine 113/cysteine 119, and cysteine 121/cysteine 139. Asparagine 114 carries N-linked (GlcNAc...) asparagine glycosylation. Residues asparagine 162 and asparagine 202 are each glycosylated (N-linked (GlcNAc...) asparagine). The helical transmembrane segment at 271–291 (VIAVIAVVSVAVVAGVVVLVV) threads the bilayer. At 292-317 (TKRRKSGKYKKVELKELGEMRSEPSL) the chain is on the cytoplasmic side.

The protein belongs to the EPCAM family. As to expression, expressed in kidney, lung, ovary and testis. High levels of expression in immortalized keratinocytes.

It is found in the membrane. Its function is as follows. May function as a growth factor receptor. This Mus musculus (Mouse) protein is Tumor-associated calcium signal transducer 2 (Tacstd2).